Reading from the N-terminus, the 118-residue chain is Large ribosomal subunit protein bL20 (118 aa).

It belongs to the bacterial ribosomal protein bL20 family.

Binds directly to 23S ribosomal RNA and is necessary for the in vitro assembly process of the 50S ribosomal subunit. It is not involved in the protein synthesizing functions of that subunit. The polypeptide is Large ribosomal subunit protein bL20 (Caldicellulosiruptor saccharolyticus (strain ATCC 43494 / DSM 8903 / Tp8T 6331)).